Reading from the N-terminus, the 428-residue chain is Serine--tRNA ligase (428 aa).

Residue 235–237 (TAE) participates in L-serine binding. 266-268 (RSE) is a binding site for ATP. Glutamate 289 contributes to the L-serine binding site. Residue 353–356 (EISS) coordinates ATP. An L-serine-binding site is contributed by serine 389.

Belongs to the class-II aminoacyl-tRNA synthetase family. Type-1 seryl-tRNA synthetase subfamily. As to quaternary structure, homodimer. The tRNA molecule binds across the dimer.

It is found in the cytoplasm. It catalyses the reaction tRNA(Ser) + L-serine + ATP = L-seryl-tRNA(Ser) + AMP + diphosphate + H(+). The catalysed reaction is tRNA(Sec) + L-serine + ATP = L-seryl-tRNA(Sec) + AMP + diphosphate + H(+). It functions in the pathway aminoacyl-tRNA biosynthesis; selenocysteinyl-tRNA(Sec) biosynthesis; L-seryl-tRNA(Sec) from L-serine and tRNA(Sec): step 1/1. Functionally, catalyzes the attachment of serine to tRNA(Ser). Is also able to aminoacylate tRNA(Sec) with serine, to form the misacylated tRNA L-seryl-tRNA(Sec), which will be further converted into selenocysteinyl-tRNA(Sec). This Shewanella woodyi (strain ATCC 51908 / MS32) protein is Serine--tRNA ligase.